The sequence spans 249 residues: General transcription factor IIF subunit 2 (249 aa).

A2 carries the post-translational modification N-acetylalanine. Residues K22, K33, and K137 each carry the N6-acetyllysine modification. Position 142 is a phosphoserine (S142). The DNA site is built by G227 and H229. S248 bears the Phosphoserine mark.

It belongs to the TFIIF beta subunit family. In terms of assembly, heterodimer of an alpha and a beta subunit. Interacts with HTATSF1 and URI1. Interacts with GPBP1. Interacts with GTF2B (via N-terminus); this interaction is inhibited in presence of GTF2F1. Part of TBP-based Pol II pre-initiation complex (PIC), in which Pol II core assembles with general transcription factors and other specific initiation factors including GTF2E1, GTF2E2, GTF2F1, GTF2F2, TCEA1, ERCC2, ERCC3, GTF2H2, GTF2H3, GTF2H4, GTF2H5, GTF2A1, GTF2A2, GTF2B and TBP; this large multi-subunit PIC complex mediates DNA unwinding and targets Pol II core to the transcription start site where the first phosphodiester bond forms.

Its subcellular location is the nucleus. In terms of biological role, TFIIF is a general transcription initiation factor that binds to RNA polymerase II and helps to recruit it to the initiation complex in collaboration with TFIIB. The protein is General transcription factor IIF subunit 2 (Gtf2f2) of Mus musculus (Mouse).